The following is a 202-amino-acid chain: Arenicin-1 (202 aa).

The signal sequence occupies residues 1–25 (MTSTQSVAVCATLILAIFCVNDIHC). Positions 26-181 (DPIAEARAAA…SGDNNEPEKR (156 aa)) are excised as a propeptide. In terms of domain architecture, BRICHOS spans 73–168 (GDGVEGSVMV…ACQGKSVYWL (96 aa)). 2 cysteine pairs are disulfide-bonded: C100-C160 and C184-C201.

Has antimicrobial activity against the Gram-negative bacteria E.coli and P.mirabilis, the Gram-positive bacterium L.monocytogenes and the yeast C.albicans. The polypeptide is Arenicin-1 (Arenicola marina (Lugworm)).